The sequence spans 155 residues: Protein-export protein SecB (155 aa).

It belongs to the SecB family. As to quaternary structure, homotetramer, a dimer of dimers. One homotetramer interacts with 1 SecA dimer.

The protein resides in the cytoplasm. Its function is as follows. One of the proteins required for the normal export of preproteins out of the cell cytoplasm. It is a molecular chaperone that binds to a subset of precursor proteins, maintaining them in a translocation-competent state. It also specifically binds to its receptor SecA. This chain is Protein-export protein SecB, found in Escherichia coli O139:H28 (strain E24377A / ETEC).